We begin with the raw amino-acid sequence, 398 residues long: Isochorismate synthase DhbC (398 aa).

Ser-271 bears the Phosphoserine mark.

Belongs to the isochorismate synthase family.

It catalyses the reaction chorismate = isochorismate. The protein operates within siderophore biosynthesis; bacillibactin biosynthesis. This is Isochorismate synthase DhbC (dhbC) from Bacillus subtilis (strain 168).